Here is an 82-residue protein sequence, read N- to C-terminus: Leucinostatins biosynthesis cluster protein M (82 aa).

The interval 34 to 82 (ARNETHDPSGPRAPVSSMRLGPRSRPYHHGTARLRGSPNCSRDSSSAAT) is disordered. Residues 71 to 82 (PNCSRDSSSAAT) show a composition bias toward polar residues.

Functionally, part of the gene cluster that mediates the biosynthesis of the lipopeptide antibiotics leucinostatins that show extensive biological activities, including antimalarial, antiviral, antibacterial, antifungal, and antitumor activities, as well as phytotoxic. The function of lcsM within the leucinostatins biosynthesis has not been identified yet. In Purpureocillium lilacinum (Paecilomyces lilacinus), this protein is Leucinostatins biosynthesis cluster protein M.